A 356-amino-acid polypeptide reads, in one-letter code: Deoxyribonuclease-2-beta (356 aa).

Positions 1-22 (MTAQPLKAALPLLFVALSGVLG) are cleaved as a signal peptide. 4 N-linked (GlcNAc...) asparagine glycosylation sites follow: N77, N98, N114, and N273.

This sequence belongs to the DNase II family. In terms of tissue distribution, liver specific.

It localises to the lysosome. The catalysed reaction is Endonucleolytic cleavage to nucleoside 3'-phosphates and 3'-phosphooligonucleotide end-products.. In terms of biological role, hydrolyzes DNA under acidic conditions. Does not require divalent cations for activity. Participates in the degradation of nuclear DNA during lens cell differentiation. The polypeptide is Deoxyribonuclease-2-beta (Dnase2b) (Rattus norvegicus (Rat)).